A 72-amino-acid chain; its full sequence is Disintegrin sasaimin (72 aa).

In terms of domain architecture, Disintegrin spans 1-72 (EAGEECDCGA…SAGCPRNPFH (72 aa)). 6 cysteine pairs are disulfide-bonded: Cys6–Cys21, Cys8–Cys16, Cys15–Cys38, Cys29–Cys35, Cys34–Cys59, and Cys47–Cys66. The Cell attachment site motif lies at 51–53 (RGD).

This sequence belongs to the venom metalloproteinase (M12B) family. P-II subfamily. P-IIa sub-subfamily. In terms of assembly, monomer. In terms of tissue distribution, expressed by the venom gland.

The protein resides in the secreted. Inhibits ADP- (IC(50)=66 nM) and collagen-induced (IC(50)=100 nM) aggregation of human platelets. In vitro, inhibits adhesion of endothelial cells to vitronectin, type-I collagen and, to a lower degree, fibronectin and laminin. This chain is Disintegrin sasaimin, found in Cerrophidion sasai (Costa Rica montane pitviper).